The sequence spans 245 residues: Peroxisome biogenesis protein 19-2 (245 aa).

Positions 17 to 106 are disordered; that stretch reads ALDDFKDLNL…LSSKQQPTGS (90 aa). 2 stretches are compositionally biased toward basic and acidic residues: residues 33–44 and 71–92; these read VKKEEGDKKETE and AKEDHVTEALDKLREQTRETVK. Positions 96 to 105 are enriched in polar residues; sequence SLSSKQQPTG. The residue at position 242 (Cys242) is a Cysteine methyl ester. Cys242 is lipidated: S-farnesyl cysteine. The propeptide at 243-245 is removed in mature form; the sequence is CVM.

This sequence belongs to the peroxin-19 family. As to quaternary structure, dimer. Interacts with PEX10 (via C-terminus). In terms of processing, may be farnesylated. As to expression, expressed in roots, leaves, flowers, siliques and stems. Highest expression in roots and leaves.

Its subcellular location is the cytoplasm. The protein resides in the peroxisome membrane. Its function is as follows. Contributes to morphology determination of peroxisomes, but not to import of peroxisomal matrix proteins. Required for proper post-translational import and stabilization of peroxisomal membrane proteins (PMPs). Acts as a cytosolic import receptor for PMPs and delivers them to the docking factor PEX3 at the peroxisomal membrane for subsequent insertion into the membrane. Acts as a chaperone in stabilizing or maintaining PMPs in the lipid bilayer. The polypeptide is Peroxisome biogenesis protein 19-2 (PEX19-2) (Arabidopsis thaliana (Mouse-ear cress)).